Here is a 291-residue protein sequence, read N- to C-terminus: MAMRQCAIYGKGGIGKSTTTQNLVAALAEMGKKVMIVGCDPKADSTRLILHSKAQNTIMEMAAEAGTVEDLELEDVLKVGYGGVKCVESGGPEPGVGCAGRGVITAINFLEEEGAYEDDLDFVFYDVLGDVVCGGFAMPIRENKAQEIYIVCSGEMMAMYAANNISKGIVKYANSGSVRLGGLICNSRNTDREDELIIALAAKLGTQMIHFVPRDNVVQRAEIRRMTVIEYDPTAKQADEYRTLARKVVENKMLIIPNPITMDELEALLMEFGVMEEEDESIVGKAAAAEE.

10–17 (GKGGIGKS) contacts ATP. Residue C98 participates in [4Fe-4S] cluster binding. Position 101 is an ADP-ribosylarginine; by dinitrogenase reductase ADP-ribosyltransferase (R101). C133 provides a ligand contact to [4Fe-4S] cluster.

Belongs to the NifH/BchL/ChlL family. As to quaternary structure, homodimer. Requires [4Fe-4S] cluster as cofactor. The reversible ADP-ribosylation of Arg-101 inactivates the nitrogenase reductase and regulates nitrogenase activity.

It catalyses the reaction N2 + 8 reduced [2Fe-2S]-[ferredoxin] + 16 ATP + 16 H2O = H2 + 8 oxidized [2Fe-2S]-[ferredoxin] + 2 NH4(+) + 16 ADP + 16 phosphate + 6 H(+). Functionally, the key enzymatic reactions in nitrogen fixation are catalyzed by the nitrogenase complex, which has 2 components: the iron protein (component 2) and a component 1 which is either a molybdenum-iron protein, a vanadium-iron, or an iron-iron protein. The chain is Nitrogenase iron protein 1 (nifH1) from Azotobacter chroococcum mcd 1.